A 448-amino-acid polypeptide reads, in one-letter code: MSLIVSDRFRIVVGLGKSGMSLVRFLANQGVSFAVADTRENPPELATLRRDYPQVEVRCGELDVDFLCRADELYVSPGLALATPALQQAHARGVKLSGDIELFARYAKAPVIAITGSNAKSTVTTLVGEMAAAAGKRVAVGGNLGTPALDLLSDEVELYVMELSSFQLETTDQLNAEVATVLNISEDHMDRYSGLPAYHLAKHRIFRGARQVVVNGQDALSRPLIGEGLPCWTFGLNKPDFHGFGLREENGEKYLAFQFENLMPVRELKVRGAHNQANALAALALGHAVGLPFDAMLASLREFTGLEHRCQWLREHDGVHYYNDSKATNVGAALAAIEGLGSDIDGKLVLIAGGDGKGADFSGLRAPVARHCRAAVLLGRDAELIAQALGDAVPLLRVDTVQAAVEHSAKLAQCGDAVLLSPACASLDMFKNYEERGRVFAQAVECLS.

116 to 122 (GSNAKST) provides a ligand contact to ATP.

This sequence belongs to the MurCDEF family.

The protein resides in the cytoplasm. The enzyme catalyses UDP-N-acetyl-alpha-D-muramoyl-L-alanine + D-glutamate + ATP = UDP-N-acetyl-alpha-D-muramoyl-L-alanyl-D-glutamate + ADP + phosphate + H(+). The protein operates within cell wall biogenesis; peptidoglycan biosynthesis. Its function is as follows. Cell wall formation. Catalyzes the addition of glutamate to the nucleotide precursor UDP-N-acetylmuramoyl-L-alanine (UMA). The polypeptide is UDP-N-acetylmuramoylalanine--D-glutamate ligase (Pseudomonas syringae pv. syringae (strain B728a)).